A 100-amino-acid polypeptide reads, in one-letter code: Mini zinc finger protein 2 (100 aa).

Positions 1–26 (MRKRQVVLRRASPEEPSRSSSTASSL) are disordered. The ZF-HD dimerization-type; degenerate zinc finger occupies 33–83 (YGECQKNHAAAVGGYAVDGCREFMASRGEEGTVAALTCAACGCHRSFHRRE).

Homo- and heterodimers. Interacts with ZHD1, ZHD3, ZHD5, ZHD8, ZHD10 and ZHD13. Mostly expressed in stems, flowers and siliques, and, to a lower extent, in inflorescence.

The protein localises to the cytoplasm. In terms of biological role, inhibits zinc finger homeodomain (ZHD) transcription factors by interacting with them to prevent both their nuclear localization and their DNA-binding properties. Involved in integrating signals from multiple hormones by regulating the expression of specific genes. The polypeptide is Mini zinc finger protein 2 (MIF2) (Arabidopsis thaliana (Mouse-ear cress)).